Reading from the N-terminus, the 214-residue chain is Rac-like GTP-binding protein 3 (214 aa).

15–22 (GDGAVGKT) is a GTP binding site. Positions 37–45 (YIPTVFDNF) match the Effector region motif. GTP is bound by residues 62–66 (DTAGQ) and 120–123 (TKLD).

This sequence belongs to the small GTPase superfamily. Rho family. May be palmitoylated.

The protein resides in the cytoplasm. It is found in the membrane. Its function is as follows. Inactive GDP-bound Rho GTPases reside in the cytosol, are found in a complex with Rho GDP-dissociation inhibitors (Rho GDIs), and are released from the GDI protein in order to translocate to membranes upon activation. The chain is Rac-like GTP-binding protein 3 (RAC3) from Oryza sativa subsp. japonica (Rice).